Here is a 189-residue protein sequence, read N- to C-terminus: Holliday junction branch migration complex subunit RuvA (189 aa).

A domain I region spans residues 1-63; it reads MIYAMYGVLE…DDEISLYGFS (63 aa). Positions 64–135 are domain II; the sequence is DVLKLKLFEK…ELKDSMKEFD (72 aa). The interval 135–139 is flexible linker; it reads DVTLT. The tract at residues 140–189 is domain III; that stretch reads EKDKKILEAIEALVTLGFSRNQSKKAVTQILKKDDSLDDIIKKALKFLSR.

It belongs to the RuvA family. Homotetramer. Forms an RuvA(8)-RuvB(12)-Holliday junction (HJ) complex. HJ DNA is sandwiched between 2 RuvA tetramers; dsDNA enters through RuvA and exits via RuvB. An RuvB hexamer assembles on each DNA strand where it exits the tetramer. Each RuvB hexamer is contacted by two RuvA subunits (via domain III) on 2 adjacent RuvB subunits; this complex drives branch migration. In the full resolvosome a probable DNA-RuvA(4)-RuvB(12)-RuvC(2) complex forms which resolves the HJ.

It localises to the cytoplasm. Functionally, the RuvA-RuvB-RuvC complex processes Holliday junction (HJ) DNA during genetic recombination and DNA repair, while the RuvA-RuvB complex plays an important role in the rescue of blocked DNA replication forks via replication fork reversal (RFR). RuvA specifically binds to HJ cruciform DNA, conferring on it an open structure. The RuvB hexamer acts as an ATP-dependent pump, pulling dsDNA into and through the RuvAB complex. HJ branch migration allows RuvC to scan DNA until it finds its consensus sequence, where it cleaves and resolves the cruciform DNA. This chain is Holliday junction branch migration complex subunit RuvA, found in Thermosipho melanesiensis (strain DSM 12029 / CIP 104789 / BI429).